Consider the following 356-residue polypeptide: Fructose-bisphosphate aldolase 1, chloroplastic (356 aa).

The N-terminal 6 residues, 1-6 (GLTIRA), are a transit peptide targeting the chloroplast. Residues R53 and K143 each contribute to the substrate site. The active-site Proton acceptor is E183. The active-site Schiff-base intermediate with dihydroxyacetone-P is the K225.

This sequence belongs to the class I fructose-bisphosphate aldolase family.

It is found in the plastid. The protein resides in the chloroplast. The catalysed reaction is beta-D-fructose 1,6-bisphosphate = D-glyceraldehyde 3-phosphate + dihydroxyacetone phosphate. It participates in carbohydrate degradation; glycolysis; D-glyceraldehyde 3-phosphate and glycerone phosphate from D-glucose: step 4/4. This chain is Fructose-bisphosphate aldolase 1, chloroplastic, found in Pisum sativum (Garden pea).